The chain runs to 428 residues: Serine--tRNA ligase (428 aa).

235 to 237 is a binding site for L-serine; that stretch reads TAE. 266–268 serves as a coordination point for ATP; sequence RSE. Residue E289 coordinates L-serine. 353–356 contributes to the ATP binding site; sequence EISS. An L-serine-binding site is contributed by S389.

The protein belongs to the class-II aminoacyl-tRNA synthetase family. Type-1 seryl-tRNA synthetase subfamily. In terms of assembly, homodimer. The tRNA molecule binds across the dimer.

It localises to the cytoplasm. It catalyses the reaction tRNA(Ser) + L-serine + ATP = L-seryl-tRNA(Ser) + AMP + diphosphate + H(+). It carries out the reaction tRNA(Sec) + L-serine + ATP = L-seryl-tRNA(Sec) + AMP + diphosphate + H(+). It participates in aminoacyl-tRNA biosynthesis; selenocysteinyl-tRNA(Sec) biosynthesis; L-seryl-tRNA(Sec) from L-serine and tRNA(Sec): step 1/1. Its function is as follows. Catalyzes the attachment of serine to tRNA(Ser). Is also able to aminoacylate tRNA(Sec) with serine, to form the misacylated tRNA L-seryl-tRNA(Sec), which will be further converted into selenocysteinyl-tRNA(Sec). This chain is Serine--tRNA ligase, found in Shewanella sediminis (strain HAW-EB3).